A 546-amino-acid chain; its full sequence is Cysteine desulfurase SufS (546 aa).

The N-terminal stretch at 1 to 22 is a signal peptide; it reads MLRGPRCLYIYLFFVFLPFSFC. Lys291 carries the post-translational modification N6-(pyridoxal phosphate)lysine. Cys497 functions as the Cysteine persulfide intermediate in the catalytic mechanism.

Belongs to the class-V pyridoxal-phosphate-dependent aminotransferase family. Csd subfamily. In terms of assembly, monomer. Interacts with SufE; interaction enhances cysteine desulfurase activity of SufS. Requires pyridoxal 5'-phosphate as cofactor. In terms of processing, proteolytically cleaved.

It localises to the plastid. The protein localises to the apicoplast. It carries out the reaction (sulfur carrier)-H + L-cysteine = (sulfur carrier)-SH + L-alanine. It functions in the pathway cofactor biosynthesis; iron-sulfur cluster biosynthesis. In terms of biological role, catalyzes sulfur activation and mobilization in sulfur mobilization (SUF) pathway for iron-sulfur (Fe-S) cluster biogenesis. Active when in complex with a partner protein SufE. Required for apicoplast maintenance. Plays a role in the development of sporozoites in oocysts in mosquitoes. May provide sulfur for MNMA-mediated tRNA modifications. The polypeptide is Cysteine desulfurase SufS (Plasmodium falciparum (isolate 3D7)).